The primary structure comprises 1072 residues: LRR receptor-like serine/threonine-protein kinase RGI5 (1072 aa).

An N-terminal signal peptide occupies residues 1 to 21; it reads MERERSNFFFLFLFCSWVSMA. Residues 22 to 706 lie on the Extracellular side of the membrane; sequence QPTLSLSSDG…NGVKSPKIVA (685 aa). A disulfide bond links Cys-56 and Cys-63. 25 LRR repeats span residues 66–89, 90–113, 114–138, 140–162, 164–185, 187–211, 212–234, 235–259, 260–283, 285–307, 308–331, 332–355, 356–379, 381–402, 403–427, 429–451, 452–475, 477–499, 500–523, 524–546, 548–571, 572–595, 597–619, 620–642, and 643–667; these read DNRVISVSIPDTFLNLSSIPDLSS, LSSLQFLNLSSTNLSGPIPPSFGK, LTHLRLLDLSSNSLSGPIPSELGRL, TLQFLILNANKLSGSIPSQISNL, ALQVLCLQDNLLNGSIPSSFGS, VSLQQFRLGGNTNLGGPIPAQLGFL, KNLTTLGFAASGLSGSIPSTFGN, LVNLQTLALYDTEISGTIPPQLGLC, SELRNLYLHMNKLTGSIPKELGKL, KITSLLLWGNSLSGVIPPEISNC, SSLVVFDVSANDLTGDIPGDLGKL, VWLEQLQLSDNMFTGQIPWELSNC, SSLIALQLDKNKLSGSIPSQIGNL, SLQSFFLWENSISGTIPSSFGN, CTDLVALDLSRNKLTGRIPEELFSL, RLSKLLLLGNSLSGGLPKSVAKC, QSLVRLRVGENQLSGQIPKEIGEL, NLVFLDLYMNHFSGGLPYEISNI, TVLELLDVHNNYITGDIPAQLGNL, VNLEQLDLSRNSFTGNIPLSFGN, SYLNKLILNNNLLTGQIPKSIKNL, QKLTLLDLSYNSLSGEIPQELGQV, SLTINLDLSYNTFTGNIPETFSD, LTQLQSLDLSSNSLHGDIKVLGS, and LTSLASLNISCNNFSGPIPSTPFFK. Asn-80, Asn-97, and Asn-102 each carry an N-linked (GlcNAc...) asparagine glycan. The Small peptide recognition motif lies at 171–172; the sequence is QD. A glycan (N-linked (GlcNAc...) asparagine) is linked at Asn-176. The Small peptide recognition signature appears at 193–196; the sequence is RLGG. Asn-213 carries N-linked (GlcNAc...) asparagine glycosylation. 3 consecutive short sequence motifs (small peptide recognition) follow at residues 216-221, Tyr-244, and 266-268; these read TLGFAA and YLH. Asn-306 is a glycosylation site (N-linked (GlcNAc...) asparagine). Short sequence motifs (small peptide recognition) lie at residues 314-317 and 336-338; these read DVSA and QLQ. The N-linked (GlcNAc...) asparagine glycan is linked to Asn-354. The short motif at 384–388 is the Small peptide recognition element; sequence SFFLW. Asn-402 is a glycosylation site (N-linked (GlcNAc...) asparagine). Short sequence motifs (small peptide recognition) lie at residues 410-413, 432-436, and 456-458; these read DLSR, KLLLL, and RLR. N-linked (GlcNAc...) asparagine glycosylation occurs at Asn-498. Residue Asn-546 is glycosylated (N-linked (GlcNAc...) asparagine). N-linked (GlcNAc...) asparagine glycosylation is found at Asn-650 and Asn-655. The helical transmembrane segment at 707–727 threads the bilayer; it reads LTAVILASITIAILAAWLLIL. The Cytoplasmic segment spans residues 728-1072; the sequence is RNNHLYKTSQ…SQPLIKPSSS (345 aa). Residue Thr-764 is modified to Phosphothreonine. Positions 772-1067 constitute a Protein kinase domain; that stretch reads LTDENVIGKG…EWGKTSQPLI (296 aa). Residues 778 to 786 and Lys-800 contribute to the ATP site; that span reads IGKGCSGIV. A phosphotyrosine mark is found at Tyr-851 and Tyr-887. The active-site Proton acceptor is the Asp-900. Ser-936 carries the post-translational modification Phosphoserine. 2 positions are modified to phosphotyrosine: Tyr-944 and Tyr-951. Thr-952 carries the post-translational modification Phosphothreonine.

Belongs to the protein kinase superfamily. Ser/Thr protein kinase family. In terms of assembly, binds to RGF1; this interaction triggers the formation of heterodimers with SERK1. In terms of processing, phosphorylated and ubiquitinated upon interaction with RGF1, thus leading to activation a subsequent degradation. Autophosphorylated. In terms of tissue distribution, expressed in roots and hypocotyls.

It is found in the membrane. The catalysed reaction is L-seryl-[protein] + ATP = O-phospho-L-seryl-[protein] + ADP + H(+). It catalyses the reaction L-threonyl-[protein] + ATP = O-phospho-L-threonyl-[protein] + ADP + H(+). Together with RGI1, RGI2, RGI3 and RGI4, acts as a receptor of RGF1, a peptide hormone that maintains the postembryonic root stem cell niche by regulating the expression levels and patterns of the transcription factor PLETHORA (PLT). Links RGF1 signal with its downstream components. This Arabidopsis thaliana (Mouse-ear cress) protein is LRR receptor-like serine/threonine-protein kinase RGI5.